Here is a 625-residue protein sequence, read N- to C-terminus: Mesothelin (625 aa).

Positions 1–35 (MALPTAQPLLGSCGSPICSRSFLLLLLSLGWLPLL) are cleaved as a signal peptide. Serine 202 bears the Phosphoserine mark. An intrachain disulfide couples cysteine 304 to cysteine 328. N-linked (GlcNAc...) asparagine glycans are attached at residues asparagine 390, asparagine 488, and asparagine 517. Serine 600 carries the GPI-anchor amidated serine lipid modification. Residues 601–625 (SGAPLLGPGFVFAWIPALLSALRLS) constitute a propeptide, removed in mature form.

This sequence belongs to the mesothelin family. In terms of assembly, interacts with MUC16. Post-translationally, proteolytically cleaved by a furin-like convertase to generate megakaryocyte-potentiating factor (MPF), and the cleaved form of mesothelin. Specifically expressed in lung. Overexpressed in hereditary renal carcinoma developed by Eker rats.

It is found in the cell membrane. The protein localises to the golgi apparatus. It localises to the secreted. Functionally, membrane-anchored forms may play a role in cellular adhesion. In terms of biological role, megakaryocyte-potentiating factor (MPF) may potentiate megakaryocyte colony formation. This Rattus norvegicus (Rat) protein is Mesothelin (Msln).